A 353-amino-acid chain; its full sequence is Guanine nucleotide-binding protein subunit alpha (353 aa).

The N-myristoyl glycine moiety is linked to residue G2. C3 is lipidated: S-palmitoyl cysteine. The region spanning 33 to 353 is the G-alpha domain; sequence NEIKMLLLGA…QLHLRECGLL (321 aa). The segment at 36 to 49 is G1 motif; that stretch reads KMLLLGAGESGKST. 14 residues coordinate GTP: E44, S45, G46, K47, S48, T49, D150, L175, T181, G203, N269, K270, D272, and A325. S48 is a Mg(2+) binding site. The segment at 173-181 is G2 motif; that stretch reads DILRSRVKT. T181 lines the Mg(2+) pocket. The tract at residues 196 to 205 is G3 motif; that stretch reads YKLFDVGGQR. The segment at 265-272 is G4 motif; it reads ILFLNKID. Residues 323–328 form a G5 motif region; sequence TCATDT.

Belongs to the G-alpha family. G(q) subfamily. G proteins are composed of 3 units; alpha, beta and gamma. The alpha chain contains the guanine nucleotide binding site. Mg(2+) is required as a cofactor.

Its function is as follows. Guanine nucleotide-binding proteins (G proteins) are involved as modulators or transducers in various transmembrane signaling systems. The sequence is that of Guanine nucleotide-binding protein subunit alpha (CGP1) from Coprinellus congregatus (Inky cap fungus).